Reading from the N-terminus, the 353-residue chain is Methionine import ATP-binding protein MetN (353 aa).

The 244-residue stretch at 6–249 (LKNVDVDFPQ…PKQELTKKFV (244 aa)) folds into the ABC transporter domain. Residue 41-48 (GFSGAGKS) participates in ATP binding.

The protein belongs to the ABC transporter superfamily. Methionine importer (TC 3.A.1.24) family. The complex is composed of two ATP-binding proteins (MetN), two transmembrane proteins (MetI) and a solute-binding protein (MetQ).

It is found in the cell membrane. The enzyme catalyses L-methionine(out) + ATP + H2O = L-methionine(in) + ADP + phosphate + H(+). The catalysed reaction is D-methionine(out) + ATP + H2O = D-methionine(in) + ADP + phosphate + H(+). Part of the ABC transporter complex MetNIQ involved in methionine import. Responsible for energy coupling to the transport system. The sequence is that of Methionine import ATP-binding protein MetN from Lactobacillus acidophilus (strain ATCC 700396 / NCK56 / N2 / NCFM).